A 344-amino-acid polypeptide reads, in one-letter code: Arginine N-succinyltransferase (344 aa).

Residue leucine 125 coordinates succinyl-CoA. Histidine 229 functions as the Proton donor in the catalytic mechanism.

The protein belongs to the arginine N-succinyltransferase family.

It carries out the reaction succinyl-CoA + L-arginine = N(2)-succinyl-L-arginine + CoA + H(+). It functions in the pathway amino-acid degradation; L-arginine degradation via AST pathway; L-glutamate and succinate from L-arginine: step 1/5. Catalyzes the transfer of succinyl-CoA to arginine to produce N(2)-succinylarginine. This is Arginine N-succinyltransferase from Citrobacter koseri (strain ATCC BAA-895 / CDC 4225-83 / SGSC4696).